The primary structure comprises 21 residues: Large ribosomal subunit protein uL10 (21 aa).

This sequence belongs to the universal ribosomal protein uL10 family. In terms of assembly, part of the ribosomal stalk of the 50S ribosomal subunit. The N-terminus interacts with L11 and the large rRNA to form the base of the stalk. The C-terminus forms an elongated spine to which L12 dimers bind in a sequential fashion forming a multimeric L10(L12)X complex.

Forms part of the ribosomal stalk, playing a central role in the interaction of the ribosome with GTP-bound translation factors. In Proteus vulgaris, this protein is Large ribosomal subunit protein uL10 (rplJ).